The following is a 429-amino-acid chain: Trigger factor (429 aa).

Positions 164–249 constitute a PPIase FKBP-type domain; that stretch reads GDWAVIDHEG…LKALKVRQAP (86 aa).

It belongs to the FKBP-type PPIase family. Tig subfamily.

The protein localises to the cytoplasm. The catalysed reaction is [protein]-peptidylproline (omega=180) = [protein]-peptidylproline (omega=0). Its function is as follows. Involved in protein export. Acts as a chaperone by maintaining the newly synthesized protein in an open conformation. Functions as a peptidyl-prolyl cis-trans isomerase. The protein is Trigger factor of Anaeromyxobacter dehalogenans (strain 2CP-C).